The primary structure comprises 286 residues: Bifunctional protein FolD (286 aa).

NADP(+) contacts are provided by residues 165-167, Ser190, and Val231; that span reads GRS.

It belongs to the tetrahydrofolate dehydrogenase/cyclohydrolase family. As to quaternary structure, homodimer.

The catalysed reaction is (6R)-5,10-methylene-5,6,7,8-tetrahydrofolate + NADP(+) = (6R)-5,10-methenyltetrahydrofolate + NADPH. It catalyses the reaction (6R)-5,10-methenyltetrahydrofolate + H2O = (6R)-10-formyltetrahydrofolate + H(+). The protein operates within one-carbon metabolism; tetrahydrofolate interconversion. In terms of biological role, catalyzes the oxidation of 5,10-methylenetetrahydrofolate to 5,10-methenyltetrahydrofolate and then the hydrolysis of 5,10-methenyltetrahydrofolate to 10-formyltetrahydrofolate. This Bacillus mycoides (strain KBAB4) (Bacillus weihenstephanensis) protein is Bifunctional protein FolD.